The following is a 393-amino-acid chain: Elongation factor Tu (393 aa).

Residues 10 to 203 (KPHVNIGTIG…AVDNYIPEPV (194 aa)) enclose the tr-type G domain. The interval 19 to 26 (GHVDHGKT) is G1. 19–26 (GHVDHGKT) contributes to the GTP binding site. Residue Thr-26 coordinates Mg(2+). The segment at 60–64 (GITIS) is G2. The segment at 81–84 (DCPG) is G3. GTP contacts are provided by residues 81 to 85 (DCPGH) and 136 to 139 (NKVD). A G4 region spans residues 136–139 (NKVD). The segment at 173–175 (SAL) is G5.

This sequence belongs to the TRAFAC class translation factor GTPase superfamily. Classic translation factor GTPase family. EF-Tu/EF-1A subfamily. In terms of assembly, monomer.

It localises to the cytoplasm. The enzyme catalyses GTP + H2O = GDP + phosphate + H(+). GTP hydrolase that promotes the GTP-dependent binding of aminoacyl-tRNA to the A-site of ribosomes during protein biosynthesis. This is Elongation factor Tu from Chlorobium phaeovibrioides (strain DSM 265 / 1930) (Prosthecochloris vibrioformis (strain DSM 265)).